Consider the following 739-residue polypeptide: UPF0313 protein YgiQ (739 aa).

Residues 372 to 650 (AYEMIRFSVN…KALLRYHDPA (279 aa)) form the Radical SAM core domain. The [4Fe-4S] cluster site is built by cysteine 386, cysteine 390, and cysteine 393. The disordered stretch occupies residues 686-739 (EARRQNRNTRPALTKHTPMATQCQTPATAKKASSTQSRPVNAGAKKRPKAAVGR). Residues 704 to 724 (MATQCQTPATAKKASSTQSRP) show a composition bias toward polar residues. The span at 729-739 (AKKRPKAAVGR) shows a compositional bias: basic residues.

It belongs to the UPF0313 family. The cofactor is [4Fe-4S] cluster.

The polypeptide is UPF0313 protein YgiQ (Escherichia coli O157:H7).